We begin with the raw amino-acid sequence, 190 residues long: Transcription termination/antitermination protein NusG (190 aa).

Residues 138–166 (VGEIVTVTEGPFETFTGTVEEVDQEKARL) form the KOW domain.

Belongs to the NusG family.

Functionally, participates in transcription elongation, termination and antitermination. The sequence is that of Transcription termination/antitermination protein NusG from Rickettsia bellii (strain RML369-C).